Reading from the N-terminus, the 392-residue chain is Dual-specificity RNA methyltransferase RlmN (392 aa).

E115 functions as the Proton acceptor in the catalytic mechanism. Residues 121 to 358 enclose the Radical SAM core domain; sequence EVDRGTLCIS…YKAGYASPIR (238 aa). C128 and C369 form a disulfide bridge. [4Fe-4S] cluster contacts are provided by C135, C139, and C142. Residues 195-196, S227, 249-251, and N326 contribute to the S-adenosyl-L-methionine site; these read GE and SFH. C369 (S-methylcysteine intermediate) is an active-site residue.

This sequence belongs to the radical SAM superfamily. RlmN family. It depends on [4Fe-4S] cluster as a cofactor.

It is found in the cytoplasm. It catalyses the reaction adenosine(2503) in 23S rRNA + 2 reduced [2Fe-2S]-[ferredoxin] + 2 S-adenosyl-L-methionine = 2-methyladenosine(2503) in 23S rRNA + 5'-deoxyadenosine + L-methionine + 2 oxidized [2Fe-2S]-[ferredoxin] + S-adenosyl-L-homocysteine. It carries out the reaction adenosine(37) in tRNA + 2 reduced [2Fe-2S]-[ferredoxin] + 2 S-adenosyl-L-methionine = 2-methyladenosine(37) in tRNA + 5'-deoxyadenosine + L-methionine + 2 oxidized [2Fe-2S]-[ferredoxin] + S-adenosyl-L-homocysteine. Functionally, specifically methylates position 2 of adenine 2503 in 23S rRNA and position 2 of adenine 37 in tRNAs. m2A2503 modification seems to play a crucial role in the proofreading step occurring at the peptidyl transferase center and thus would serve to optimize ribosomal fidelity. The chain is Dual-specificity RNA methyltransferase RlmN from Jannaschia sp. (strain CCS1).